A 225-amino-acid polypeptide reads, in one-letter code: Ribosomal RNA small subunit methyltransferase G (225 aa).

Residues Gly-71, Leu-76, 121 to 122 (AE), and Arg-139 contribute to the S-adenosyl-L-methionine site. Residues 204–225 (VVEARRATPSNGRGRPGRSSRR) form a disordered region.

It belongs to the methyltransferase superfamily. RNA methyltransferase RsmG family.

The protein localises to the cytoplasm. Functionally, specifically methylates the N7 position of guanine in position 518 of 16S rRNA. This Mycobacterium sp. (strain KMS) protein is Ribosomal RNA small subunit methyltransferase G.